The sequence spans 734 residues: Photosystem I P700 chlorophyll a apoprotein A2 (734 aa).

8 consecutive transmembrane segments (helical) span residues 46 to 69 (IFAS…FHVA), 135 to 158 (LYTG…LHLQ), 175 to 199 (LNHH…HVAI), 273 to 291 (IAHH…GHMY), 330 to 353 (IHFQ…QHMY), 369 to 395 (AALY…IFFI), 417 to 439 (AIKS…LYVH), and 517 to 535 (FLVH…LILV). The [4Fe-4S] cluster site is built by Cys559 and Cys568. Helical transmembrane passes span 575-596 (AFYL…YWHW) and 643-665 (LSVW…MFLI). Chlorophyll a contacts are provided by His654, Met662, and Tyr670. Phylloquinone is bound at residue Trp671. Residues 707–727 (LVGLAHFSVGYIFTYAAFLIA) traverse the membrane as a helical segment.

The protein belongs to the PsaA/PsaB family. The PsaA/B heterodimer binds the P700 chlorophyll special pair and subsequent electron acceptors. PSI consists of a core antenna complex that captures photons, and an electron transfer chain that converts photonic excitation into a charge separation. The eukaryotic PSI reaction center is composed of at least 11 subunits. The cofactor is P700 is a chlorophyll a/chlorophyll a' dimer, A0 is one or more chlorophyll a, A1 is one or both phylloquinones and FX is a shared 4Fe-4S iron-sulfur center..

The protein resides in the plastid. Its subcellular location is the chloroplast thylakoid membrane. The catalysed reaction is reduced [plastocyanin] + hnu + oxidized [2Fe-2S]-[ferredoxin] = oxidized [plastocyanin] + reduced [2Fe-2S]-[ferredoxin]. Functionally, psaA and PsaB bind P700, the primary electron donor of photosystem I (PSI), as well as the electron acceptors A0, A1 and FX. PSI is a plastocyanin-ferredoxin oxidoreductase, converting photonic excitation into a charge separation, which transfers an electron from the donor P700 chlorophyll pair to the spectroscopically characterized acceptors A0, A1, FX, FA and FB in turn. Oxidized P700 is reduced on the lumenal side of the thylakoid membrane by plastocyanin. The chain is Photosystem I P700 chlorophyll a apoprotein A2 from Drimys granadensis.